A 323-amino-acid chain; its full sequence is tRNA U34 carboxymethyltransferase (323 aa).

Carboxy-S-adenosyl-L-methionine contacts are provided by residues lysine 91, tryptophan 105, lysine 110, glycine 130, aspartate 152–threonine 154, isoleucine 181–glutamate 182, methionine 196, tyrosine 200, and arginine 315.

Belongs to the class I-like SAM-binding methyltransferase superfamily. CmoB family. As to quaternary structure, homotetramer.

It catalyses the reaction carboxy-S-adenosyl-L-methionine + 5-hydroxyuridine(34) in tRNA = 5-carboxymethoxyuridine(34) in tRNA + S-adenosyl-L-homocysteine + H(+). Its function is as follows. Catalyzes carboxymethyl transfer from carboxy-S-adenosyl-L-methionine (Cx-SAM) to 5-hydroxyuridine (ho5U) to form 5-carboxymethoxyuridine (cmo5U) at position 34 in tRNAs. The protein is tRNA U34 carboxymethyltransferase of Salmonella enteritidis PT4 (strain P125109).